A 137-amino-acid polypeptide reads, in one-letter code: Structural protein A137R (137 aa).

It belongs to the asfivirus A137R family. As to quaternary structure, interacts with host TBK1.

The protein resides in the virion. Its subcellular location is the host cytoplasm. Plays a role in the inhibition of the host innate immune response. Mechanistically, promotes the autophagy-mediated lysosomal degradation of host TBK1 and affects IRF3 nuclear translocation to block type I IFN production. The polypeptide is Structural protein A137R (Ornithodoros (relapsing fever ticks)).